A 1362-amino-acid polypeptide reads, in one-letter code: Integrator complex subunit 2 homolog (1362 aa).

Residues 1–10 (MITSNNNNKN) show a composition bias toward low complexity. Disordered stretches follow at residues 1–20 (MITSNNNNKNNNKKDVEMKS), 629–660 (TTGTTTGISPSSSTTTTSSTGGATSTSISSPN), and 928–963 (NNNKDLEDYNNNNNNNNDDVKMKDKEKEDKEEEEEE). Over residues 945–955 (DDVKMKDKEKE) the composition is skewed to basic and acidic residues.

It belongs to the Integrator subunit 2 family. In terms of assembly, component of the Integrator complex. The core complex associates with protein phosphatase 2A subunits, to form the Integrator-PP2A (INTAC) complex.

It localises to the nucleus. Its subcellular location is the cytoplasm. Its function is as follows. Component of the integrator complex, a multiprotein complex that terminates RNA polymerase II (Pol II) transcription in the promoter-proximal region of genes. The integrator complex provides a quality checkpoint during transcription elongation by driving premature transcription termination of transcripts that are unfavorably configured for transcriptional elongation: the complex terminates transcription by (1) catalyzing dephosphorylation of the C-terminal domain (CTD) of Pol II subunit polr2a, (2) degrading the exiting nascent RNA transcript via endonuclease activity and (3) promoting the release of Pol II from bound DNA. The integrator complex is also involved in terminating the synthesis of non-coding Pol II transcripts, such as enhancer RNAs (eRNAs), small nuclear RNAs (snRNAs), telomerase RNAs and long non-coding RNAs (lncRNAs). The sequence is that of Integrator complex subunit 2 homolog (ints2) from Dictyostelium discoideum (Social amoeba).